The sequence spans 298 residues: Cell wall protein DAN1 (298 aa).

Residues 1-19 form the signal peptide; it reads MSRISILAVAAALVASATA. The interval 122–168 is disordered; it reads PASTTEASSTSTSEASSAATESSSSSESSAETSSNAASTQATVSSES. Residue asparagine 275 is the site of GPI-anchor amidated asparagine attachment. The propeptide at 276–298 is removed in mature form; that stretch reads GANKFNNGVFGAAAIAGAAALLL.

The protein belongs to the SRP1/TIP1 family. Extensively O-glycosylated. Post-translationally, the GPI-anchor is attached to the protein in the endoplasmic reticulum and serves to target the protein to the cell surface. There, the glucosamine-inositol phospholipid moiety is cleaved off and the GPI-modified mannoprotein is covalently attached via its lipidless GPI glycan remnant to the 1,6-beta-glucan of the outer cell wall layer.

The protein localises to the secreted. It localises to the cell wall. The protein resides in the membrane. Component of the cell wall. This chain is Cell wall protein DAN1 (DAN1), found in Saccharomyces cerevisiae (strain ATCC 204508 / S288c) (Baker's yeast).